Here is an 886-residue protein sequence, read N- to C-terminus: Neurotrophin 1 (886 aa).

Residues 1 to 29 form the signal peptide; sequence MKAGRAFGCLFWALLYCVLYLDLVSGNSA. Positions 30-498 are excised as a propeptide; it reads DDELMDFDFA…FDDFSLSKKR (469 aa). N-linked (GlcNAc...) asparagine glycans are attached at residues Asn-267 and Asn-317. The segment at 321–340 is disordered; the sequence is FQQPSSQEEEKMASSNGGQS. Asn-353 carries an N-linked (GlcNAc...) asparagine glycan. The disordered stretch occupies residues 369–436; it reads RNSAEETEEP…HKPVVTPPNK (68 aa). The region spanning 508 to 597 is the Spaetzle domain; sequence MCQSVVRYAR…KVPTCCSCQV (90 aa). Disulfide bonds link Cys-509–Cys-564, Cys-546–Cys-593, and Cys-553–Cys-595. A glycan (N-linked (GlcNAc...) asparagine) is linked at Asn-623. Disordered regions lie at residues 675 to 754 and 789 to 886; these read PGIS…QYHR and VSAP…QSIQ. Low complexity predominate over residues 698 to 710; it reads YKSSSSSSKKYYS. The segment covering 797 to 807 has biased composition (pro residues); sequence PAPPLPMPPMP. Composition is skewed to basic residues over residues 815–827 and 874–886; these read HQAH…HHLH and SRRH…QSIQ.

As to quaternary structure, homodimer; disulfide-linked. In terms of tissue distribution, detected in the fan-shaped body which is a component of the locomotion center in the central nervous system (CNS) (at protein level). Expressed in the optic lobes and brain.

In terms of biological role, neurotrophin which may function as a ligand for the Toll-related receptors Toll-7 and Tollo. Binds to Toll-7 and probably acts as its ligand in promoting motor axon targeting and neuronal survival in the central nervous system (CNS). Involved in synaptic targeting of ISNb/d motorneurons and also some SNa motorneurons. In larvae, involved in the negative regulation of the tracheal immune response to bacterial infection perhaps by acting as a ligand for the Toll-related receptor Tollo. May be involved in the normal development of specific neurons at the neuromuscular junction. In Drosophila melanogaster (Fruit fly), this protein is Neurotrophin 1.